Reading from the N-terminus, the 836-residue chain is Lon protease (836 aa).

In terms of domain architecture, Lon N-terminal spans 41–233 (LPVLPLRNTV…RLIHFLNREV (193 aa)). 385-392 (GPPGVGKT) contacts ATP. One can recognise a Lon proteolytic domain in the interval 627–811 (VMLSGVAVGL…DDLIDYVLEP (185 aa)). Residues Ser-714 and Lys-757 contribute to the active site. Residues 816–836 (APQFKVEDKDHTPETTGNESE) form a disordered region.

The protein belongs to the peptidase S16 family. Homohexamer. Organized in a ring with a central cavity.

The protein resides in the cytoplasm. It carries out the reaction Hydrolysis of proteins in presence of ATP.. In terms of biological role, ATP-dependent serine protease that mediates the selective degradation of mutant and abnormal proteins as well as certain short-lived regulatory proteins. Required for cellular homeostasis and for survival from DNA damage and developmental changes induced by stress. Degrades polypeptides processively to yield small peptide fragments that are 5 to 10 amino acids long. Binds to DNA in a double-stranded, site-specific manner. This chain is Lon protease, found in Chloroherpeton thalassium (strain ATCC 35110 / GB-78).